The following is a 259-amino-acid chain: Dihydroorotate dehydrogenase B (NAD(+)), electron transfer subunit (259 aa).

Positions 2–102 (MQKQNMIVVN…LGPLGHGFPV (101 aa)) constitute an FAD-binding FR-type domain. Residues 53-56 (RPIS), 70-72 (LYR), and 77-78 (GT) contribute to the FAD site. Residues Cys221, Cys226, Cys229, and Cys246 each coordinate [2Fe-2S] cluster.

This sequence belongs to the PyrK family. Heterotetramer of 2 PyrK and 2 PyrD type B subunits. [2Fe-2S] cluster serves as cofactor. The cofactor is FAD.

Its pathway is pyrimidine metabolism; UMP biosynthesis via de novo pathway; orotate from (S)-dihydroorotate (NAD(+) route): step 1/1. Responsible for channeling the electrons from the oxidation of dihydroorotate from the FMN redox center in the PyrD type B subunit to the ultimate electron acceptor NAD(+). The protein is Dihydroorotate dehydrogenase B (NAD(+)), electron transfer subunit of Bacillus cereus (strain ATCC 14579 / DSM 31 / CCUG 7414 / JCM 2152 / NBRC 15305 / NCIMB 9373 / NCTC 2599 / NRRL B-3711).